The following is a 420-amino-acid chain: D-tagatose-1,6-bisphosphate aldolase subunit GatZ (420 aa).

The protein belongs to the GatZ/KbaZ family. GatZ subfamily. Forms a complex with GatY.

It participates in carbohydrate metabolism; D-tagatose 6-phosphate degradation; D-glyceraldehyde 3-phosphate and glycerone phosphate from D-tagatose 6-phosphate: step 2/2. Its function is as follows. Component of the tagatose-1,6-bisphosphate aldolase GatYZ that is required for full activity and stability of the Y subunit. Could have a chaperone-like function for the proper and stable folding of GatY. When expressed alone, GatZ does not show any aldolase activity. Is involved in the catabolism of galactitol. The protein is D-tagatose-1,6-bisphosphate aldolase subunit GatZ of Escherichia coli (strain SE11).